The sequence spans 490 residues: MDPVVVLLLSLFFLLFLSLWRPSSGRGKLPPGPTPLPIIGNFFQVDMKDIRQSLTNFSKTYGPVYTLYVGSQPTVVLHGYEALKEALVDHGEEFSGRGRLPICEKVAKGQGIAFSHGNVWKATRHFTVKTLRNLGMGKGTIEDKVQEEAKWLVKELKKTNGSPCDPQFIMGCAPGNVICSIILQNRFDYEDKDFLNLIEKVNEAVKIISSPGIQVFNIFPILLDYCPGNHNIYFKNHTWLKSYLLEKIKEHEESLDVSNPRDFIDYFLIERNQENANQWMNYTLEHLAIMVTDLFFAGIETVSSTMRFALLLLMKYPHVTAKVQEEIDHVIGRHRSPCMQDRSHMPYTNAMVHEVQRYIDIGPNGLLHEVTCDTKFRNYFIPKGTAVLTSLTSVLHDSKEFPNPEMFDPGHFLDENGNFKKSDYFIPFSAGKRMCLGESLARMELFLFLTTILQNFKLKSLVDPKDINTTPICSSLSSVPPTFQMRFIPL.

Residue Cys-435 coordinates heme.

It belongs to the cytochrome P450 family. It depends on heme as a cofactor. As to expression, liver, and to a lesser extent in prostate, kidney, heart and brain.

The protein localises to the endoplasmic reticulum membrane. It is found in the microsome membrane. The enzyme catalyses an organic molecule + reduced [NADPH--hemoprotein reductase] + O2 = an alcohol + oxidized [NADPH--hemoprotein reductase] + H2O + H(+). Its function is as follows. Cytochromes P450 are a group of heme-thiolate monooxygenases. In liver microsomes, this enzyme is involved in an NADPH-dependent electron transport pathway. It oxidizes a variety of structurally unrelated compounds, including steroids, fatty acids, and xenobiotics. In Rattus norvegicus (Rat), this protein is Cytochrome P450 2C13, male-specific (Cyp2c13).